The primary structure comprises 74 residues: MDVAAAKALGAGISVIALAGVGLGIGNIFASLIASVARNPSSRDQVFSIGILGFALTEAVALFALLIAFLILFA.

Helical transmembrane passes span Ile-13–Ile-33 and Ile-51–Ile-71.

Belongs to the ATPase C chain family. In terms of assembly, F-type ATPases have 2 components, F(1) - the catalytic core - and F(0) - the membrane proton channel. F(1) has five subunits: alpha(3), beta(3), gamma(1), delta(1), epsilon(1). F(0) has three main subunits: a(1), b(2) and c(10-14). The alpha and beta chains form an alternating ring which encloses part of the gamma chain. F(1) is attached to F(0) by a central stalk formed by the gamma and epsilon chains, while a peripheral stalk is formed by the delta and b chains.

Its subcellular location is the cell inner membrane. F(1)F(0) ATP synthase produces ATP from ADP in the presence of a proton or sodium gradient. F-type ATPases consist of two structural domains, F(1) containing the extramembraneous catalytic core and F(0) containing the membrane proton channel, linked together by a central stalk and a peripheral stalk. During catalysis, ATP synthesis in the catalytic domain of F(1) is coupled via a rotary mechanism of the central stalk subunits to proton translocation. Functionally, key component of the F(0) channel; it plays a direct role in translocation across the membrane. A homomeric c-ring of between 10-14 subunits forms the central stalk rotor element with the F(1) delta and epsilon subunits. The protein is ATP synthase subunit c of Granulibacter bethesdensis (strain ATCC BAA-1260 / CGDNIH1).